The following is a 223-amino-acid chain: Phage shock protein A homolog (223 aa).

A coiled-coil region spans residues 29-185; the sequence is IDQALRDMRS…AGMEDRNKAM (157 aa).

The protein belongs to the PspA/Vipp/IM30 family.

In Deinococcus radiodurans (strain ATCC 13939 / DSM 20539 / JCM 16871 / CCUG 27074 / LMG 4051 / NBRC 15346 / NCIMB 9279 / VKM B-1422 / R1), this protein is Phage shock protein A homolog.